Here is a 346-residue protein sequence, read N- to C-terminus: GTPase Obg (346 aa).

Residues 1–158 enclose the Obg domain; the sequence is MKFLDQVKIY…RAIWLRLKLI (158 aa). One can recognise an OBG-type G domain in the interval 159–327; that stretch reads ADVGLVGLPN…LLREAFALVR (169 aa). GTP is bound by residues 165–172, 190–194, 212–215, 279–282, and 308–310; these read GLPNAGKS, FTTLA, DIPG, NKID, and SGF. Ser172 and Thr192 together coordinate Mg(2+).

The protein belongs to the TRAFAC class OBG-HflX-like GTPase superfamily. OBG GTPase family. As to quaternary structure, monomer. Mg(2+) is required as a cofactor.

Its subcellular location is the cytoplasm. An essential GTPase which binds GTP, GDP and possibly (p)ppGpp with moderate affinity, with high nucleotide exchange rates and a fairly low GTP hydrolysis rate. Plays a role in control of the cell cycle, stress response, ribosome biogenesis and in those bacteria that undergo differentiation, in morphogenesis control. The chain is GTPase Obg from Phenylobacterium zucineum (strain HLK1).